The chain runs to 531 residues: Inactive beta-amylase 4, chloroplastic (531 aa).

Residues 1–62 (MTETGVIGCG…KRGRFITKLR (62 aa)) constitute a chloroplast transit peptide.

It belongs to the glycosyl hydrolase 14 family. Preferentially expressed in vascular tissue of cotyledons, leaves, petioles, stems, petals, siliques and roots, particularly in phloem. Also present in root tip.

The protein localises to the plastid. It is found in the chloroplast. In terms of biological role, no alpha-1,4-glucan hydrolase activity, including beta-amylase, alpha-amylase, a-glucosidase or alpha-amyloglucosidase. However, facilitates or regulates starch breakdown, especially at night, by a mechanism involving direct interaction with starch or other alpha-1,4-glucan. This Arabidopsis thaliana (Mouse-ear cress) protein is Inactive beta-amylase 4, chloroplastic (BAM4).